A 236-amino-acid chain; its full sequence is MRLAVNIDHIATLRNARGEQEPDPVAAALLAERCGAAGIVCHLREDRRHIKDLDLARLREAVTTKLDLEMAMTGELQEIALKTKPELITLVPEKREELTTEGGFDVARHFAVLKEFLKPLNDNGIEVSLFIEPEKKAVDLAREAGADLVELHTGLYAQKELENNTDLELQRIREAATYAKSIGLRVVAGHGLNYRNIGPFREIPEIEEVSIGHAIIARAVFTGLDEAVREMLRLIQ.

A 3-amino-2-oxopropyl phosphate-binding site is contributed by asparagine 6. 8–9 contributes to the 1-deoxy-D-xylulose 5-phosphate binding site; it reads DH. Arginine 17 is a binding site for 3-amino-2-oxopropyl phosphate. Catalysis depends on histidine 42, which acts as the Proton acceptor. Residues arginine 44 and histidine 49 each contribute to the 1-deoxy-D-xylulose 5-phosphate site. The active-site Proton acceptor is glutamate 69. Threonine 99 contributes to the 1-deoxy-D-xylulose 5-phosphate binding site. Histidine 190 acts as the Proton donor in catalysis. Residues glycine 191 and 212 to 213 contribute to the 3-amino-2-oxopropyl phosphate site; that span reads GH.

The protein belongs to the PNP synthase family. As to quaternary structure, homooctamer; tetramer of dimers.

Its subcellular location is the cytoplasm. It catalyses the reaction 3-amino-2-oxopropyl phosphate + 1-deoxy-D-xylulose 5-phosphate = pyridoxine 5'-phosphate + phosphate + 2 H2O + H(+). Its pathway is cofactor biosynthesis; pyridoxine 5'-phosphate biosynthesis; pyridoxine 5'-phosphate from D-erythrose 4-phosphate: step 5/5. In terms of biological role, catalyzes the complicated ring closure reaction between the two acyclic compounds 1-deoxy-D-xylulose-5-phosphate (DXP) and 3-amino-2-oxopropyl phosphate (1-amino-acetone-3-phosphate or AAP) to form pyridoxine 5'-phosphate (PNP) and inorganic phosphate. The chain is Pyridoxine 5'-phosphate synthase from Chlorobium phaeobacteroides (strain DSM 266 / SMG 266 / 2430).